The sequence spans 39 residues: Photosystem II reaction center protein L (39 aa).

The chain crosses the membrane as a helical span at residues 18–38; it reads SLYLGLLFVFVTGVLMSSYFF.

The protein belongs to the PsbL family. PSII is composed of 1 copy each of membrane proteins PsbA, PsbB, PsbC, PsbD, PsbE, PsbF, PsbH, PsbI, PsbJ, PsbK, PsbL, PsbM, PsbT, PsbX, PsbY, PsbZ, Psb30/Ycf12, peripheral proteins PsbO, CyanoQ (PsbQ), PsbU, PsbV and a large number of cofactors. It forms dimeric complexes.

It is found in the cellular thylakoid membrane. In terms of biological role, one of the components of the core complex of photosystem II (PSII). PSII is a light-driven water:plastoquinone oxidoreductase that uses light energy to abstract electrons from H(2)O, generating O(2) and a proton gradient subsequently used for ATP formation. It consists of a core antenna complex that captures photons, and an electron transfer chain that converts photonic excitation into a charge separation. This subunit is found at the monomer-monomer interface and is required for correct PSII assembly and/or dimerization. This Synechococcus sp. (strain CC9605) protein is Photosystem II reaction center protein L.